Here is a 335-residue protein sequence, read N- to C-terminus: Dihydroorotate dehydrogenase (quinone) (335 aa).

FMN contacts are provided by residues 58–62 (AGADK) and threonine 82. Lysine 62 lines the substrate pocket. Position 107–111 (107–111 (NRNGF)) interacts with substrate. Asparagine 135 and asparagine 168 together coordinate FMN. Asparagine 168 is a binding site for substrate. Serine 171 serves as the catalytic Nucleophile. Substrate is bound at residue asparagine 173. Residues lysine 213 and glycine 241 each coordinate FMN. Residue 242–243 (NT) coordinates substrate. FMN contacts are provided by residues glycine 264, glycine 293, and 314 to 315 (YS).

The protein belongs to the dihydroorotate dehydrogenase family. Type 2 subfamily. In terms of assembly, monomer. It depends on FMN as a cofactor.

The protein localises to the cell membrane. The enzyme catalyses (S)-dihydroorotate + a quinone = orotate + a quinol. It participates in pyrimidine metabolism; UMP biosynthesis via de novo pathway; orotate from (S)-dihydroorotate (quinone route): step 1/1. Catalyzes the conversion of dihydroorotate to orotate with quinone as electron acceptor. This Actinobacillus pleuropneumoniae serotype 7 (strain AP76) protein is Dihydroorotate dehydrogenase (quinone).